A 601-amino-acid chain; its full sequence is Putative ankyrin repeat protein R841 (601 aa).

ANK repeat units lie at residues 17-50 (NNITSLMLAVSNYEIHDNYDTVKSLIDCGFDVNA), 54-86 (HGKSVLMYAINIDSDKNINVIKLLIDHGADVNH), 91-123 (QRSVLIHTCMYMEYGYNNKTISLLIDKGANINY), 165-197 (RENILMRIIKKLDNKYSITTIKLLLEHGINIDH), 201-234 (YGQTALMYACIYINGLKNIPIIKLLLEYGANINS), 238-269 (KGWSPLMSVFKNDIIDIKTIKFLVEKGAEINS), 274-310 (NETMLYVFCKKLSTRIYGQACVKIFDFLIKKGISIDN), 314-349 (KGYTPLMAFIIKISEYNEYTEKFIKLLLDYGANINS), 361-390 (VCCDVVSGSVSHCKIEIINTLIKYGADVNS), 397-427 (TILMNLRYSIHSENYITVLEILLRNGANPNI), 432-463 (YHKFPLLIDILNRGGELRIIKLMLQYNIDPNI), and 467-500 (IGNNALLFVAKHYKKNERFSFLKLLLTYGASYNC).

The polypeptide is Putative ankyrin repeat protein R841 (Acanthamoeba polyphaga mimivirus (APMV)).